A 55-amino-acid polypeptide reads, in one-letter code: Large ribosomal subunit protein bL33 (55 aa).

Belongs to the bacterial ribosomal protein bL33 family.

This Orientia tsutsugamushi (strain Boryong) (Rickettsia tsutsugamushi) protein is Large ribosomal subunit protein bL33.